The primary structure comprises 338 residues: Lipoyl synthase (338 aa).

The segment at 1–22 (MTTVQEAVPNLIPTQDVTPRPA) is disordered. [4Fe-4S] cluster-binding residues include C84, C89, C95, C110, C114, C117, and S324. The Radical SAM core domain maps to 96–313 (FSGGTATFMI…AEEGYKMGFK (218 aa)).

It belongs to the radical SAM superfamily. Lipoyl synthase family. Requires [4Fe-4S] cluster as cofactor.

It localises to the cytoplasm. It carries out the reaction [[Fe-S] cluster scaffold protein carrying a second [4Fe-4S](2+) cluster] + N(6)-octanoyl-L-lysyl-[protein] + 2 oxidized [2Fe-2S]-[ferredoxin] + 2 S-adenosyl-L-methionine + 4 H(+) = [[Fe-S] cluster scaffold protein] + N(6)-[(R)-dihydrolipoyl]-L-lysyl-[protein] + 4 Fe(3+) + 2 hydrogen sulfide + 2 5'-deoxyadenosine + 2 L-methionine + 2 reduced [2Fe-2S]-[ferredoxin]. Its pathway is protein modification; protein lipoylation via endogenous pathway; protein N(6)-(lipoyl)lysine from octanoyl-[acyl-carrier-protein]: step 2/2. Its function is as follows. Catalyzes the radical-mediated insertion of two sulfur atoms into the C-6 and C-8 positions of the octanoyl moiety bound to the lipoyl domains of lipoate-dependent enzymes, thereby converting the octanoylated domains into lipoylated derivatives. In Pseudomonas entomophila (strain L48), this protein is Lipoyl synthase.